The following is a 144-amino-acid chain: NADH-ubiquinone oxidoreductase chain 6 (144 aa).

Transmembrane regions (helical) follow at residues 1-21 (MIKL…MNID), 25-45 (SSFF…MSMH), 46-66 (IWFS…ILVY), 75-95 (VVKS…FSPV), and 108-128 (FYYS…LFFM).

The protein belongs to the complex I subunit 6 family.

It is found in the mitochondrion membrane. It carries out the reaction a ubiquinone + NADH + 5 H(+)(in) = a ubiquinol + NAD(+) + 4 H(+)(out). Functionally, core subunit of the mitochondrial membrane respiratory chain NADH dehydrogenase (Complex I) that is believed to belong to the minimal assembly required for catalysis. Complex I functions in the transfer of electrons from NADH to the respiratory chain. The immediate electron acceptor for the enzyme is believed to be ubiquinone. The polypeptide is NADH-ubiquinone oxidoreductase chain 6 (nd6) (Caenorhabditis briggsae).